A 349-amino-acid chain; its full sequence is UDP-N-acetylenolpyruvoylglucosamine reductase (349 aa).

Positions 25–213 constitute an FAD-binding PCMH-type domain; sequence VGPVARRLVT…VEQGERTDPQ (189 aa). Arg-165 is an active-site residue. Ser-242 serves as the catalytic Proton donor. Glu-341 is an active-site residue.

It belongs to the MurB family. It depends on FAD as a cofactor.

Its subcellular location is the cytoplasm. It carries out the reaction UDP-N-acetyl-alpha-D-muramate + NADP(+) = UDP-N-acetyl-3-O-(1-carboxyvinyl)-alpha-D-glucosamine + NADPH + H(+). Its pathway is cell wall biogenesis; peptidoglycan biosynthesis. Its function is as follows. Cell wall formation. The sequence is that of UDP-N-acetylenolpyruvoylglucosamine reductase from Mycolicibacterium gilvum (strain PYR-GCK) (Mycobacterium gilvum (strain PYR-GCK)).